The chain runs to 248 residues: tRNA (guanine-N(1)-)-methyltransferase (248 aa).

S-adenosyl-L-methionine-binding positions include G113 and 133-138; that span reads IGDYVL.

It belongs to the RNA methyltransferase TrmD family. As to quaternary structure, homodimer.

It localises to the cytoplasm. The enzyme catalyses guanosine(37) in tRNA + S-adenosyl-L-methionine = N(1)-methylguanosine(37) in tRNA + S-adenosyl-L-homocysteine + H(+). Specifically methylates guanosine-37 in various tRNAs. This is tRNA (guanine-N(1)-)-methyltransferase from Shewanella baltica (strain OS223).